A 1578-amino-acid chain; its full sequence is Chitinase ChiA (1578 aa).

Positions 1–19 (MKHYYRLLFLLLFPLLASA) are cleaved as a signal peptide. The 442-residue stretch at 25–466 (KKVVGYYAQW…NQVDTSFGSV (442 aa)) folds into the GH18 1 domain. Residues 26–446 (KVVGYYAQWS…GGMIWELSQD (421 aa)) form a GH18N region. Chitin-binding positions include 92-93 (DA) and 119-122 (GGWT). Residue Glu162 is the Proton donor of the active site. Chitin-binding positions include Tyr163, 249 to 252 (FGYD), and Trp441. In terms of domain architecture, CNA-B spans 485 to 536 (TDVTVELRNASNAVIQTVVSANGNFAFNNLTSGQNYSLTALKATYTFTPVTL). The GH18C stretch occupies residues 1142 to 1462 (KIILGYAHSW…GLMTWSVNWD (321 aa)). The GH18 2 domain occupies 1142-1483 (KIILGYAHSW…KAYAAYFASQ (342 aa)). Glu1264 (proton donor) is an active-site residue. The segment at 1473 to 1578 (SKAYAAYFAS…KSFKVMNFLN (106 aa)) is CTD.

This sequence belongs to the glycosyl hydrolase 18 family. Chitinase class II subfamily.

The protein localises to the secreted. The enzyme catalyses Random endo-hydrolysis of N-acetyl-beta-D-glucosaminide (1-&gt;4)-beta-linkages in chitin and chitodextrins.. In terms of biological role, major extracellular chitinase, which is essential for chitin utilization. The sequence is that of Chitinase ChiA (chiA) from Flavobacterium johnsoniae (strain ATCC 17061 / DSM 2064 / JCM 8514 / BCRC 14874 / CCUG 350202 / NBRC 14942 / NCIMB 11054 / UW101) (Cytophaga johnsonae).